The following is a 359-amino-acid chain: Cytohesin-interacting protein (359 aa).

Residues 77–166 enclose the PDZ domain; sequence LVTVEKQDNE…LLTIETLNGT (90 aa). Residues 166–188 form an interaction with CYTH1 region; sequence TMILKRTELEAKLQVLKQTLKQK. The stretch at 166–188 forms a coiled coil; sequence TMILKRTELEAKLQVLKQTLKQK.

As to quaternary structure, interacts with CYTH1 and SNX27. In terms of tissue distribution, expressed in lymph nodes, thymus, spleen, lung, peripheral blood leukocytes and bone marrow.

The protein localises to the cytoplasm. It localises to the early endosome. In terms of biological role, by its binding to cytohesin-1 (CYTH1), it modifies activation of ARFs by CYTH1 and its precise function may be to sequester CYTH1 in the cytoplasm. In Homo sapiens (Human), this protein is Cytohesin-interacting protein (CYTIP).